The primary structure comprises 168 residues: ATP synthase F(1) complex subunit delta, mitochondrial (168 aa).

The transit peptide at 1–22 (MLPSALLRRPGLGRLVRQVRLY) directs the protein to the mitochondrion. Lysine 136 and lysine 165 each carry N6-acetyllysine; alternate. 2 positions are modified to N6-succinyllysine; alternate: lysine 136 and lysine 165.

Belongs to the ATPase epsilon chain family. Component of the ATP synthase complex composed at least of ATP5F1A/subunit alpha, ATP5F1B/subunit beta, ATP5MC1/subunit c (homooctomer), MT-ATP6/subunit a, MT-ATP8/subunit 8, ATP5ME/subunit e, ATP5MF/subunit f, ATP5MG/subunit g, ATP5MK/subunit k, ATP5MJ/subunit j, ATP5F1C/subunit gamma, ATP5F1D/subunit delta, ATP5F1E/subunit epsilon, ATP5PF/subunit F6, ATP5PB/subunit b, ATP5PD/subunit d, ATP5PO/subunit OSCP. ATP synthase complex consists of a soluble F(1) head domain (subunits alpha(3) and beta(3)) - the catalytic core - and a membrane F(0) domain - the membrane proton channel (subunits c, a, 8, e, f, g, k and j). These two domains are linked by a central stalk (subunits gamma, delta, and epsilon) rotating inside the F1 region and a stationary peripheral stalk (subunits F6, b, d, and OSCP). Component of a complex composed at least by ATPIF1, ATP5F1A, ATP5F1B, ATP5F1C AND ATP5F1E.

It is found in the mitochondrion. It localises to the mitochondrion inner membrane. Subunit delta, of the mitochondrial membrane ATP synthase complex (F(1)F(0) ATP synthase or Complex V) that produces ATP from ADP in the presence of a proton gradient across the membrane which is generated by electron transport complexes of the respiratory chain. ATP synthase complex consist of a soluble F(1) head domain - the catalytic core - and a membrane F(1) domain - the membrane proton channel. These two domains are linked by a central stalk rotating inside the F(1) region and a stationary peripheral stalk. During catalysis, ATP synthesis in the catalytic domain of F(1) is coupled via a rotary mechanism of the central stalk subunits to proton translocation. In vivo, can only synthesize ATP although its ATP hydrolase activity can be activated artificially in vitro. With the central stalk subunit gamma, is essential for the biogenesis of F(1) catalytic part of the ATP synthase complex namely in the formation of F1 assembly intermediate. This Bos taurus (Bovine) protein is ATP synthase F(1) complex subunit delta, mitochondrial.